The primary structure comprises 569 residues: Phosphatase and actin regulator 2 (569 aa).

Residues 1–13 show a composition bias toward polar residues; the sequence is MGQTSVSALSPQP. The interval 1–47 is disordered; that stretch reads MGQTSVSALSPQPGSVDGLDKASIANSDGPPAGSQTPPFKRKGKLST. Ser-27 is modified (phosphoserine). Thr-36 carries the phosphothreonine modification. The RPEL 1 repeat unit spans residues 71-96; sequence AVLERKISTRQSREELIRRGLLKELP. 2 disordered regions span residues 98 to 253 and 295 to 483; these read QDGD…TGKP and PTLP…QEAK. Over residues 140 to 151 the composition is skewed to basic and acidic residues; sequence GPPREEQAEEKT. Low complexity predominate over residues 162–176; the sequence is GSKASSSPSASSTSS. Residues 212–224 are compositionally biased toward polar residues; that stretch reads LSPNTVTSETSSL. Ser-357 bears the Phosphoserine mark. Residues 386-399 are compositionally biased toward acidic residues; sequence TDDDDEEDDDDDST. RPEL repeat units lie at residues 412-437, 450-475, and 488-513; these read DTLA…QRTS, TKLV…KQKN, and RRLS…RFNE. Over residues 423–444 the composition is skewed to basic and acidic residues; it reads SKKELEDKNILQRTSEEERQEL. At Ser-457 the chain carries Phosphoserine. The segment covering 461–483 has biased composition (basic and acidic residues); the sequence is TTEELEQRSILKQKNEEEEQEAK. Phosphoserine is present on Ser-495.

It belongs to the phosphatase and actin regulator family. Binds PPP1CA and actin. Expressed in the brain with high levels in the cerebellum, specifically in the Purkinje cell layer, choroid plexus and thalamus (ventral, rhomboid and anterior nuclei). Moderate to high expression in the hippocampus, piriform cortex, olfactory bulb, entorhinal cortex, as well as in geniculate bodies, lamboid septal zone, preoptic area and ventral pallidum (at protein level).

The polypeptide is Phosphatase and actin regulator 2 (Phactr2) (Rattus norvegicus (Rat)).